Reading from the N-terminus, the 148-residue chain is Insoluble matrix shell protein 1 (148 aa).

The disordered stretch occupies residues 105–128 (KSGRTEARNTDDSGDPIIDPRTAD).

In terms of tissue distribution, component of the acid-insoluble organic matrix of the calcified shell.

The protein resides in the secreted. The polypeptide is Insoluble matrix shell protein 1 (Ruditapes philippinarum (Japanese carpet shell)).